We begin with the raw amino-acid sequence, 408 residues long: Glutamate N-acetyltransferase (408 aa).

Positions 150, 176, 189, 271, 403, and 408 each coordinate substrate. Catalysis depends on threonine 189, which acts as the Nucleophile.

This sequence belongs to the ArgJ family. Heterotetramer of two alpha and two beta chains.

Its subcellular location is the cytoplasm. It carries out the reaction N(2)-acetyl-L-ornithine + L-glutamate = N-acetyl-L-glutamate + L-ornithine. It functions in the pathway amino-acid biosynthesis; L-arginine biosynthesis; L-ornithine and N-acetyl-L-glutamate from L-glutamate and N(2)-acetyl-L-ornithine (cyclic): step 1/1. In terms of biological role, catalyzes the transfer of the acetyl group from N(2)-acetylornithine to glutamate, forming N-acetylglutamate and L-ornithine. In Methanococcus vannielii (strain ATCC 35089 / DSM 1224 / JCM 13029 / OCM 148 / SB), this protein is Glutamate N-acetyltransferase.